The following is a 480-amino-acid chain: Thyroid receptor-interacting protein 6 (480 aa).

Over residues 1 to 12 (MSGPTWLPPKQP) the composition is skewed to pro residues. The tract at residues 1 to 43 (MSGPTWLPPKQPEPSRLPQGRSLPRGALGPPTAHGATLQPHPR) is disordered. The residue at position 25 (Arg25) is an Asymmetric dimethylarginine; alternate. Position 25 is an omega-N-methylarginine; alternate (Arg25). Tyr55 carries the post-translational modification Phosphotyrosine; by SRC. The interval 57 to 84 (PPGVPEDRGPTWVGSHGTPQRLQGLPPD) is disordered. Ser92 carries the phosphoserine modification. Residues 107-134 (LDGGRSHAPRRPDRQAFEAPPPHAYRGG) are disordered. The span at 108-122 (DGGRSHAPRRPDRQA) shows a compositional bias: basic and acidic residues. Omega-N-methylarginine is present on residues Arg111, Arg183, and Arg190. Residue Ser193 is modified to Phosphoserine. Omega-N-methylarginine occurs at positions 209 and 242. Residues 218-257 (RSHREPGPGVPEGPSGVHIPAGGGRGGGHEPQGPLGQPPE) form a disordered region. Over residues 238-247 (AGGGRGGGHE) the composition is skewed to gly residues. LIM zinc-binding domains lie at 281–339 (GRCG…YVAT), 341–401 (EKCS…KFAP), and 404–471 (SVCG…RIQE). Positions 473-480 (SATVTTDC) are interaction with MAGI1 and PTPN13.

Belongs to the zyxin/ajuba family. In terms of assembly, specifically interacts with the ligand binding domain of the thyroid receptor (TR) in the presence of thyroid hormone. Interacts (via the third LIM domain and C-terminus) with PTPN13 (via the second PDZ domain). Interacts (via the second LIM domain or via the third LIM domain plus C-terminus) with PDLIM4 (via PDZ domain). Found in a complex with PTPN13 and PDLIM4. Interacts with SVIL isoform 2. Interacts with LPAR2 but not other LPA receptors. Interacts with PRKAA2. Interacts with MAGI1. Interacts with SCRIB. In case of infection, interacts with S.typhimurium protein sseI. Post-translationally, phosphorylation at Tyr-55 by SRC is required for enhancement of lysophosphatidic acid-induced cell migration. Tyr-55 is dephosphorylated by PTPN13. In terms of tissue distribution, highly expressed in kidney, stomach, lung, heart and testis. Low expression levels in brain, colon, thymus, pancreas and skin. Not expressed in skeletal muscle.

It localises to the cytoplasm. It is found in the cytoskeleton. Its subcellular location is the cell junction. The protein resides in the focal adhesion. The protein localises to the nucleus. Functionally, relays signals from the cell surface to the nucleus to weaken adherens junction and promote actin cytoskeleton reorganization and cell invasiveness. Involved in lysophosphatidic acid-induced cell adhesion and migration. Acts as a transcriptional coactivator for NF-kappa-B and JUN, and mediates the transrepression of these transcription factors induced by glucocorticoid receptor. The chain is Thyroid receptor-interacting protein 6 (Trip6) from Mus musculus (Mouse).